Reading from the N-terminus, the 489-residue chain is Long chain base biosynthesis protein 2b (489 aa).

The helical transmembrane segment at 2-22 threads the bilayer; that stretch reads ITIPYLTAVSTYFSYGLLFAF. At lysine 311 the chain carries N6-(pyridoxal phosphate)lysine.

This sequence belongs to the class-II pyridoxal-phosphate-dependent aminotransferase family. As to quaternary structure, heterodimer with LCB1. Component of the serine palmitoyltransferase (SPT) complex, composed of LCB1 and LCB2 (LCB2a or LCB2b). Pyridoxal 5'-phosphate is required as a cofactor. As to expression, ubiquitous with the highest expression in flowers.

It localises to the endoplasmic reticulum membrane. It catalyses the reaction L-serine + hexadecanoyl-CoA + H(+) = 3-oxosphinganine + CO2 + CoA. It functions in the pathway lipid metabolism; sphingolipid metabolism. Its function is as follows. Serine palmitoyltransferase (SPT). The heterodimer formed with LCB1 constitutes the catalytic core. Plays an important role during male gametogenesis and embryogenesis. The protein is Long chain base biosynthesis protein 2b (LCB2b) of Arabidopsis thaliana (Mouse-ear cress).